A 420-amino-acid chain; its full sequence is Gamma-glutamyl phosphate reductase (420 aa).

The protein belongs to the gamma-glutamyl phosphate reductase family.

The protein localises to the cytoplasm. The catalysed reaction is L-glutamate 5-semialdehyde + phosphate + NADP(+) = L-glutamyl 5-phosphate + NADPH + H(+). It functions in the pathway amino-acid biosynthesis; L-proline biosynthesis; L-glutamate 5-semialdehyde from L-glutamate: step 2/2. In terms of biological role, catalyzes the NADPH-dependent reduction of L-glutamate 5-phosphate into L-glutamate 5-semialdehyde and phosphate. The product spontaneously undergoes cyclization to form 1-pyrroline-5-carboxylate. This Alkalilimnicola ehrlichii (strain ATCC BAA-1101 / DSM 17681 / MLHE-1) protein is Gamma-glutamyl phosphate reductase.